Here is a 701-residue protein sequence, read N- to C-terminus: Rab-like protein 6 (701 aa).

The residue at position 1 (Met1) is an N-acetylmethionine. A small GTPase-like region spans residues 39–279; sequence GVQYNMKIVI…IFLEMMEARS (241 aa). Residues 50–57, 100–104, and 177–179 each bind GTP; these read GDRNTGKT, DVVDK, and YRD. A disordered region spans residues 279-701; it reads SRGHASPLTT…LRGGGDYEAL (423 aa). Low complexity predominate over residues 284–315; sequence SPLTTSGQSPSSGSQSPVVPPSTVSTGSSSPS. The segment covering 316–344 has biased composition (pro residues); sequence TPQPVLQPPLQAPPAPPAPAEAPPLPAAP. A phosphoserine mark is found at Ser394, Ser416, Ser418, Ser461, and Ser462. Residues 495–506 are compositionally biased toward low complexity; that stretch reads ALGPPRDAAPRA. Ser552 bears the Phosphoserine mark. Residues 555–569 show a composition bias toward basic and acidic residues; it reads DAQRRAGEFPVREDL. Position 570 is a phosphoserine (Ser570). Thr573 is subject to Phosphothreonine. Residues 580–589 are compositionally biased toward pro residues; the sequence is VQPPAPPKPL. A compositionally biased stretch (basic and acidic residues) spans 608–626; it reads EPGREDSSEQDKEGRPPAK. 2 positions are modified to phosphoserine: Ser614 and Ser615. The segment at 629 to 667 is interaction with CDKN2A; the sequence is KKKKKKGREEEDKAAKKRSKHKKSRERADDKGRDERRRR. Positions 643–653 are enriched in basic residues; the sequence is AKKRSKHKKSR. A compositionally biased stretch (basic and acidic residues) spans 654-665; the sequence is ERADDKGRDERR. Positions 683–701 are enriched in gly residues; the sequence is LGGGAPSGPLRGGGDYEAL.

The protein belongs to the small GTPase superfamily. Rab family.

It is found in the nucleus. It localises to the cytoplasm. Its function is as follows. May enhance cellular proliferation. May reduce growth inhibitory activity of CDKN2A. The sequence is that of Rab-like protein 6 (RABL6) from Bos taurus (Bovine).